The sequence spans 83 residues: Disintegrin isoform D-3 (83 aa).

One can recognise a Disintegrin domain in the interval 2-83 (PPVCGNELLE…GKSSDCPWNH (82 aa)). 7 disulfide bridges follow: Cys-5-Cys-24, Cys-16-Cys-34, Cys-18-Cys-29, Cys-28-Cys-51, Cys-42-Cys-48, Cys-47-Cys-72, and Cys-60-Cys-79. The Cell attachment site signature appears at 64 to 66 (RGD).

This sequence belongs to the venom metalloproteinase (M12B) family. P-II subfamily. P-IIa sub-subfamily. Monomer (disintegrin). In terms of tissue distribution, expressed by the venom gland.

The protein resides in the secreted. Functionally, inhibits fibrinogen interaction with platelets. Acts by binding to alpha-IIb/beta-3 (ITGA2B/ITGB3) on the platelet surface and inhibits aggregation induced by ADP, thrombin, platelet-activating factor and collagen. The polypeptide is Disintegrin isoform D-3 (Bitis arietans (African puff adder)).